The chain runs to 354 residues: Long form salivary protein D7L3 (354 aa).

A signal peptide spans 1–26; sequence MQLTPRSVHLVHLLLAATTLISPSWS.

Belongs to the PBP/GOBP family.

The protein resides in the secreted. Its function is as follows. Modulates blood feeding of female mosquitoes on vertebrate species by binding and sequestering different mediators involved in the host response. Binds serotonin with high affinity. Binds weakly noradrenaline and histamine. Does not bind tryptamine, octopamine, dopamine, adrenaline, leukotriene C4, leukotriene D4, leukotriene B4, ADP and U-46619, a stable analog of thromboxane A2. Inhibits agonist-induced platelet aggregation. Exhibits vasodilating activity. The protein is Long form salivary protein D7L3 of Anopheles gambiae (African malaria mosquito).